We begin with the raw amino-acid sequence, 26 residues long: Peroxidase 1 (26 aa).

D15 lines the Ca(2+) pocket.

The protein belongs to the peroxidase family. Classical plant (class III) peroxidase subfamily. It depends on heme b as a cofactor. Ca(2+) is required as a cofactor.

It localises to the secreted. It catalyses the reaction 2 a phenolic donor + H2O2 = 2 a phenolic radical donor + 2 H2O. Functionally, removal of H(2)O(2), oxidation of toxic reductants, biosynthesis and degradation of lignin, suberization, auxin catabolism, response to environmental stresses such as wounding, pathogen attack and oxidative stress. These functions might be dependent on each isozyme/isoform in each plant tissue. This Vitis vinifera (Grape) protein is Peroxidase 1.